The primary structure comprises 173 residues: NADH-ubiquinone oxidoreductase chain 6 (173 aa).

A run of 6 helical transmembrane segments spans residues 1-21 (MTYF…AVAS), 27-47 (YGVV…LSLG), 48-68 (VSFV…VVFV), 85-105 (WGVV…LIVG), 106-126 (GSIG…MFSV), and 139-159 (CGVG…FVVL).

This sequence belongs to the complex I subunit 6 family.

It is found in the mitochondrion membrane. The enzyme catalyses a ubiquinone + NADH + 5 H(+)(in) = a ubiquinol + NAD(+) + 4 H(+)(out). Core subunit of the mitochondrial membrane respiratory chain NADH dehydrogenase (Complex I) that is believed to belong to the minimal assembly required for catalysis. Complex I functions in the transfer of electrons from NADH to the respiratory chain. The immediate electron acceptor for the enzyme is believed to be ubiquinone. In Aethia psittacula (Parakeet auklet), this protein is NADH-ubiquinone oxidoreductase chain 6 (MT-ND6).